Reading from the N-terminus, the 145-residue chain is Probable D-aminoacyl-tRNA deacylase (145 aa).

Belongs to the DTD family. In terms of assembly, homodimer.

The protein localises to the cytoplasm. It carries out the reaction glycyl-tRNA(Ala) + H2O = tRNA(Ala) + glycine + H(+). The catalysed reaction is a D-aminoacyl-tRNA + H2O = a tRNA + a D-alpha-amino acid + H(+). In terms of biological role, an aminoacyl-tRNA editing enzyme that deacylates mischarged D-aminoacyl-tRNAs. Also deacylates mischarged glycyl-tRNA(Ala), protecting cells against glycine mischarging by AlaRS. Acts via tRNA-based rather than protein-based catalysis; rejects L-amino acids rather than detecting D-amino acids in the active site. By recycling D-aminoacyl-tRNA to D-amino acids and free tRNA molecules, this enzyme counteracts the toxicity associated with the formation of D-aminoacyl-tRNA entities in vivo and helps enforce protein L-homochirality. The sequence is that of Probable D-aminoacyl-tRNA deacylase from Shigella flexneri serotype 5b (strain 8401).